Reading from the N-terminus, the 161-residue chain is Cell division protein SepF (161 aa).

It belongs to the SepF family. Homodimer. Interacts with FtsZ.

It localises to the cytoplasm. In terms of biological role, cell division protein that is part of the divisome complex and is recruited early to the Z-ring. Probably stimulates Z-ring formation, perhaps through the cross-linking of FtsZ protofilaments. Its function overlaps with FtsA. The polypeptide is Cell division protein SepF (Finegoldia magna (strain ATCC 29328 / DSM 20472 / WAL 2508) (Peptostreptococcus magnus)).